The sequence spans 38 residues: Large ribosomal subunit protein bL36 (38 aa).

It belongs to the bacterial ribosomal protein bL36 family.

The protein is Large ribosomal subunit protein bL36 of Anaeromyxobacter dehalogenans (strain 2CP-1 / ATCC BAA-258).